Here is a 321-residue protein sequence, read N- to C-terminus: MGKQINNTFTWVIKNLSTLQGLEVRSKIFVVGGCKWRLIAYPEVNDADGYLSLSVYLGVPDCCESLPSGWKRHAKFSLTIVNQLSEGLSQVQETQAWFDENAPGWGFPPMLNLKDVSDKYGGFLVNDEVMVAVAVDVIEVVGSLDAPEMSESMDIKGFKVLPSQVKSVNRLFESHPDIASKFSIKNQSLKTAYMNVLLCLAETLHQSPMEISEDDLSDAKTTLAYMKSVGFKLDWLEKKLDELFEKKKEEADKIRMQNIEEELKDLRQKCSSLEALLKKEKTGVLAAKAPFLFFNNVNDDDLKWILRAVMYTLIMMLFISI.

The MATH domain occupies 6–135; that stretch reads NNTFTWVIKN…NDEVMVAVAV (130 aa). Residues 232-283 are a coiled coil; the sequence is KLDWLEKKLDELFEKKKEEADKIRMQNIEEELKDLRQKCSSLEALLKKEKTG.

This chain is MATH domain and coiled-coil domain-containing protein At3g58260, found in Arabidopsis thaliana (Mouse-ear cress).